Consider the following 559-residue polypeptide: Frizzled-5 (559 aa).

Positions 1 to 26 (MGSFRSGVFALSFVVLLLDYFAPAQA) are cleaved as a signal peptide. Residues 27–220 (ASKAIVCQEI…QPYFTQDEKM (194 aa)) lie on the Extracellular side of the membrane. The region spanning 28-149 (SKAIVCQEIT…GDPDTLCMYY (122 aa)) is the FZ domain. 5 cysteine pairs are disulfide-bonded: Cys-33–Cys-94, Cys-41–Cys-87, Cys-78–Cys-116, Cys-105–Cys-146, and Cys-109–Cys-133. N-linked (GlcNAc...) asparagine glycosylation occurs at Asn-47. Asn-150 carries an N-linked (GlcNAc...) asparagine glycan. A helical membrane pass occupies residues 221-241 (FVTFWIGLWSILCFISTFTTV). Over 242 to 257 (ATFLIDMERFRYPERP) the chain is Cytoplasmic. Residues 258–278 (IIFLSACYLFVSIGYVVRLIV) traverse the membrane as a helical segment. At 279 to 301 (GHENVACNKDHIHYETTGPALCT) the chain is on the extracellular side. Residues 302 to 322 (IVFLLIYFFGMASSIWWVILT) traverse the membrane as a helical segment. Topologically, residues 323–343 (FTWFLAAGMKWGNEAIASYSQ) are cytoplasmic. The helical transmembrane segment at 344–364 (YFHMAAWLIPSVKSIAVLALS) threads the bilayer. Over 365-387 (SVDGDPVAGICYVGNQNLDNLRG) the chain is Extracellular. Residues 388–408 (FVLAPLVVYLFSGTMFLLAGF) form a helical membrane-spanning segment. The Cytoplasmic portion of the chain corresponds to 409-434 (VSLFRIRSVIKQGGTKTDKLEKLMIR). The chain crosses the membrane as a helical span at residues 435–455 (IGIFSVLYTVPATIVVACYIY). The Extracellular segment spans residues 456-483 (EQHYREHWEKTHNCSCPGDKQRYRPDYA). A glycan (N-linked (GlcNAc...) asparagine) is linked at Asn-468. Residues 484–504 (VFMLKYLMCLVVGITSGVWIW) traverse the membrane as a helical segment. Residues 505 to 559 (SGKTLESWKRFTGRCCRNSKPINASAYSEASRALTPRTGLSNLTLPHKQVPLSHV) lie on the Cytoplasmic side of the membrane. Residues 507-512 (KTLESW) carry the Lys-Thr-X-X-X-Trp motif, mediates interaction with the PDZ domain of Dvl family members motif. Residues 557–559 (SHV) carry the PDZ-binding motif.

The protein belongs to the G-protein coupled receptor Fz/Smo family. In terms of tissue distribution, expressed in retina.

It is found in the cell membrane. Its subcellular location is the golgi apparatus membrane. Receptor for Wnt proteins that functions in the canonical Wnt/beta-catenin signaling pathway. The canonical Wnt/beta-catenin signaling pathway leads to the activation of disheveled proteins, inhibition of GSK-3 kinase, nuclear accumulation of beta-catenin and activation of Wnt target genes. A second signaling pathway involving PKC and calcium fluxes has been seen for some family members, but it is not yet clear if it represents a distinct pathway or if it can be integrated in the canonical pathway, as PKC seems to be required for Wnt-mediated inactivation of GSK-3 kinase. Both pathways seem to involve interactions with G-proteins. May be involved in transduction and intercellular transmission of polarity information during tissue morphogenesis and/or in differentiated tissues. The sequence is that of Frizzled-5 (fzd5) from Xenopus laevis (African clawed frog).